The following is a 443-amino-acid chain: Leucine-rich repeat-containing protein 17 (443 aa).

The signal sequence occupies residues 1-15; it reads MRIVAILLLFCLCRA. Residues 20–48 form a disordered region; the sequence is KSSPGVLRSQGNPSRSHGRGGRRGSSPVK. LRR repeat units follow at residues 84–105, 108–129, and 132–153; these read DLLH…MFAK, RLKS…AFFG, and KLTT…AFIY. Residues 165 to 216 enclose the LRRCT 1 domain; sequence NPWHCTCELETLISMLQIPRNRNLGNYAKCGSPPALRNKKLLQLKPQELCDE. Residues 229–270 enclose the LRRNT domain; that stretch reads SGIPAVIRPEADSTLCHNYVFPIQTLDCKRKELKKVPSNIPP. LRR repeat units lie at residues 271–292, 295–316, and 319–342; these read DIVK…EFED, ELKK…AFLG, and HLEE…EDLY. In terms of domain architecture, LRRCT 2 spans 352 to 404; sequence NPWRCDYSIHYLYYWLKHHYNVHYNGLECKTPEEYKGWSVGKYVRSYYEECPK.

As to expression, expressed in osteoblasts, spleen, lung and heart.

The protein resides in the secreted. It is found in the extracellular space. Involved in bone homeostasis. Acts as a negative regulator of RANKL-induced osteoclast precursor differentiation from bone marrow precursors. The protein is Leucine-rich repeat-containing protein 17 (Lrrc17) of Mus musculus (Mouse).